Here is a 390-residue protein sequence, read N- to C-terminus: S-adenosylmethionine synthase 1 (390 aa).

E9 is a Mg(2+) binding site. H15 contributes to the ATP binding site. K(+) is bound at residue E43. Residues E56 and Q99 each coordinate L-methionine. ATP-binding positions include 167–169 (DGK), 235–238 (SGRF), D246, 252–253 (RK), A269, K273, and K277. D246 serves as a coordination point for L-methionine. K277 is a binding site for L-methionine.

Belongs to the AdoMet synthase family. Homotetramer. Requires Mn(2+) as cofactor. Mg(2+) is required as a cofactor. The cofactor is Co(2+). It depends on K(+) as a cofactor.

The protein localises to the cytoplasm. The catalysed reaction is L-methionine + ATP + H2O = S-adenosyl-L-methionine + phosphate + diphosphate. It functions in the pathway amino-acid biosynthesis; S-adenosyl-L-methionine biosynthesis; S-adenosyl-L-methionine from L-methionine: step 1/1. Catalyzes the formation of S-adenosylmethionine from methionine and ATP. The reaction comprises two steps that are both catalyzed by the same enzyme: formation of S-adenosylmethionine (AdoMet) and triphosphate, and subsequent hydrolysis of the triphosphate. The sequence is that of S-adenosylmethionine synthase 1 (SAMS1) from Nicotiana tabacum (Common tobacco).